Consider the following 156-residue polypeptide: Ribosomal RNA large subunit methyltransferase H (156 aa).

S-adenosyl-L-methionine is bound by residues leucine 73, glycine 104, and 123-128; that span reads LSPLTM.

The protein belongs to the RNA methyltransferase RlmH family. As to quaternary structure, homodimer.

It localises to the cytoplasm. It carries out the reaction pseudouridine(1915) in 23S rRNA + S-adenosyl-L-methionine = N(3)-methylpseudouridine(1915) in 23S rRNA + S-adenosyl-L-homocysteine + H(+). Functionally, specifically methylates the pseudouridine at position 1915 (m3Psi1915) in 23S rRNA. The chain is Ribosomal RNA large subunit methyltransferase H from Proteus mirabilis (strain HI4320).